Here is a 378-residue protein sequence, read N- to C-terminus: 23S rRNA (uracil(747)-C(5))-methyltransferase RlmC (378 aa).

Residues Cys3, Cys11, Cys14, and Cys87 each coordinate [4Fe-4S] cluster. The S-adenosyl-L-methionine site is built by Gln212, Phe241, Glu262, and Asn309. Cys336 serves as the catalytic Nucleophile.

It belongs to the class I-like SAM-binding methyltransferase superfamily. RNA M5U methyltransferase family. RlmC subfamily.

It carries out the reaction uridine(747) in 23S rRNA + S-adenosyl-L-methionine = 5-methyluridine(747) in 23S rRNA + S-adenosyl-L-homocysteine + H(+). Catalyzes the formation of 5-methyl-uridine at position 747 (m5U747) in 23S rRNA. This Shewanella pealeana (strain ATCC 700345 / ANG-SQ1) protein is 23S rRNA (uracil(747)-C(5))-methyltransferase RlmC.